We begin with the raw amino-acid sequence, 247 residues long: ATP synthase subunit a, chloroplastic (247 aa).

5 consecutive transmembrane segments (helical) span residues 38–58, 95–115, 134–154, 199–219, and 220–240; these read QVLI…TIAV, VPFI…GALF, INTT…AGLT, LVVV…VMFL, and GLFT…AYIG.

Belongs to the ATPase A chain family. In terms of assembly, F-type ATPases have 2 components, CF(1) - the catalytic core - and CF(0) - the membrane proton channel. CF(1) has five subunits: alpha(3), beta(3), gamma(1), delta(1), epsilon(1). CF(0) has four main subunits: a, b, b' and c.

It localises to the plastid. It is found in the chloroplast thylakoid membrane. Its function is as follows. Key component of the proton channel; it plays a direct role in the translocation of protons across the membrane. The sequence is that of ATP synthase subunit a, chloroplastic from Piper cenocladum (Ant piper).